The chain runs to 227 residues: Cytochrome c oxidase subunit 2 (227 aa).

Residues 1-14 (MAYPFQLGLQDATS) are Mitochondrial intermembrane-facing. The chain crosses the membrane as a helical span at residues 15–45 (PIMEELTNFHDHTLMIVFLISSLVLYIISLM). The Mitochondrial matrix segment spans residues 46–59 (LTTKLTHTSTMDAQ). The chain crosses the membrane as a helical span at residues 60–87 (EVETIWTILPAVILILIALPSLRILYMM). At 88-227 (DEINNPVLTV…YFENWSASMI (140 aa)) the chain is on the mitochondrial intermembrane side. Positions 161, 196, 198, 200, 204, and 207 each coordinate Cu cation. E198 provides a ligand contact to Mg(2+). At Y218 the chain carries Phosphotyrosine.

The protein belongs to the cytochrome c oxidase subunit 2 family. Component of the cytochrome c oxidase (complex IV, CIV), a multisubunit enzyme composed of 14 subunits. The complex is composed of a catalytic core of 3 subunits MT-CO1, MT-CO2 and MT-CO3, encoded in the mitochondrial DNA, and 11 supernumerary subunits COX4I, COX5A, COX5B, COX6A, COX6B, COX6C, COX7A, COX7B, COX7C, COX8 and NDUFA4, which are encoded in the nuclear genome. The complex exists as a monomer or a dimer and forms supercomplexes (SCs) in the inner mitochondrial membrane with NADH-ubiquinone oxidoreductase (complex I, CI) and ubiquinol-cytochrome c oxidoreductase (cytochrome b-c1 complex, complex III, CIII), resulting in different assemblies (supercomplex SCI(1)III(2)IV(1) and megacomplex MCI(2)III(2)IV(2)). Found in a complex with TMEM177, COA6, COX18, COX20, SCO1 and SCO2. Interacts with TMEM177 in a COX20-dependent manner. Interacts with COX20. Interacts with COX16. The cofactor is Cu cation.

The protein localises to the mitochondrion inner membrane. It carries out the reaction 4 Fe(II)-[cytochrome c] + O2 + 8 H(+)(in) = 4 Fe(III)-[cytochrome c] + 2 H2O + 4 H(+)(out). In terms of biological role, component of the cytochrome c oxidase, the last enzyme in the mitochondrial electron transport chain which drives oxidative phosphorylation. The respiratory chain contains 3 multisubunit complexes succinate dehydrogenase (complex II, CII), ubiquinol-cytochrome c oxidoreductase (cytochrome b-c1 complex, complex III, CIII) and cytochrome c oxidase (complex IV, CIV), that cooperate to transfer electrons derived from NADH and succinate to molecular oxygen, creating an electrochemical gradient over the inner membrane that drives transmembrane transport and the ATP synthase. Cytochrome c oxidase is the component of the respiratory chain that catalyzes the reduction of oxygen to water. Electrons originating from reduced cytochrome c in the intermembrane space (IMS) are transferred via the dinuclear copper A center (CU(A)) of subunit 2 and heme A of subunit 1 to the active site in subunit 1, a binuclear center (BNC) formed by heme A3 and copper B (CU(B)). The BNC reduces molecular oxygen to 2 water molecules using 4 electrons from cytochrome c in the IMS and 4 protons from the mitochondrial matrix. The polypeptide is Cytochrome c oxidase subunit 2 (MT-CO2) (Dacnomys millardi (Millard's rat)).